The primary structure comprises 441 residues: Ribulose bisphosphate carboxylase large chain (441 aa).

At Lys-4 the chain carries N6,N6,N6-trimethyllysine. Asn-113 and Thr-163 together coordinate substrate. Lys-165 acts as the Proton acceptor in catalysis. Lys-167 contributes to the substrate binding site. Mg(2+)-binding residues include Lys-191, Asp-193, and Glu-194. At Lys-191 the chain carries N6-carboxylysine. Catalysis depends on His-284, which acts as the Proton acceptor. Residues Arg-285, His-317, and Ser-369 each coordinate substrate.

The protein belongs to the RuBisCO large chain family. Type I subfamily. In terms of assembly, heterohexadecamer of 8 large chains and 8 small chains; disulfide-linked. The disulfide link is formed within the large subunit homodimers. Mg(2+) is required as a cofactor. Post-translationally, the disulfide bond which can form in the large chain dimeric partners within the hexadecamer appears to be associated with oxidative stress and protein turnover.

It localises to the plastid. It is found in the chloroplast. The catalysed reaction is 2 (2R)-3-phosphoglycerate + 2 H(+) = D-ribulose 1,5-bisphosphate + CO2 + H2O. It catalyses the reaction D-ribulose 1,5-bisphosphate + O2 = 2-phosphoglycolate + (2R)-3-phosphoglycerate + 2 H(+). Functionally, ruBisCO catalyzes two reactions: the carboxylation of D-ribulose 1,5-bisphosphate, the primary event in carbon dioxide fixation, as well as the oxidative fragmentation of the pentose substrate in the photorespiration process. Both reactions occur simultaneously and in competition at the same active site. The protein is Ribulose bisphosphate carboxylase large chain of Darlingtonia californica (California pitcher plant).